Consider the following 366-residue polypeptide: Histone-lysine N-methyltransferase SETD7 (366 aa).

3 MORN repeats span residues 36–58, 59–81, and 106–128; these read FEGN…DGST, LEGY…DGGV, and FKGQ…DGGS. Positions 214-336 constitute an SET domain; sequence ERVYVADSLI…AEEELTVAYG (123 aa). Residues 226-228, N296, H297, and E356 contribute to the S-adenosyl-L-methionine site; that span reads AGE.

The protein belongs to the class V-like SAM-binding methyltransferase superfamily. Histone-lysine methyltransferase family. SET7 subfamily. In terms of assembly, interacts with IPF1/PDX-1.

The protein resides in the nucleus. It localises to the chromosome. It catalyses the reaction L-lysyl(4)-[histone H3] + S-adenosyl-L-methionine = N(6)-methyl-L-lysyl(4)-[histone H3] + S-adenosyl-L-homocysteine + H(+). It carries out the reaction L-lysyl-[protein] + S-adenosyl-L-methionine = N(6)-methyl-L-lysyl-[protein] + S-adenosyl-L-homocysteine + H(+). In terms of biological role, histone methyltransferase that specifically monomethylates 'Lys-4' of histone H3. H3 'Lys-4' methylation represents a specific tag for epigenetic transcriptional activation. Plays a central role in the transcriptional activation of genes such as collagenase or insulin. Recruited by IPF1/PDX-1 to the insulin promoter, leading to activate transcription. Also has methyltransferase activity toward non-histone proteins such as CGAS, p53/TP53, TAF10, and possibly TAF7 by recognizing and binding the [KR]-[STA]-K in substrate proteins. Monomethylates 'Lys-189' of TAF10, leading to increase the affinity of TAF10 for RNA polymerase II. Monomethylates 'Lys-372' of p53/TP53, stabilizing p53/TP53 and increasing p53/TP53-mediated transcriptional activation. Monomethylates 'Lys-491' of CGAS, promoting interaction between SGF29 and CGAS. This chain is Histone-lysine N-methyltransferase SETD7 (Setd7), found in Mus musculus (Mouse).